The following is a 472-amino-acid chain: 3-isopropylmalate dehydratase large subunit (472 aa).

3 residues coordinate [4Fe-4S] cluster: cysteine 353, cysteine 414, and cysteine 417.

This sequence belongs to the aconitase/IPM isomerase family. LeuC type 1 subfamily. As to quaternary structure, heterodimer of LeuC and LeuD. [4Fe-4S] cluster is required as a cofactor.

It catalyses the reaction (2R,3S)-3-isopropylmalate = (2S)-2-isopropylmalate. It participates in amino-acid biosynthesis; L-leucine biosynthesis; L-leucine from 3-methyl-2-oxobutanoate: step 2/4. Its function is as follows. Catalyzes the isomerization between 2-isopropylmalate and 3-isopropylmalate, via the formation of 2-isopropylmaleate. In Acinetobacter baumannii (strain AB0057), this protein is 3-isopropylmalate dehydratase large subunit.